The following is a 157-amino-acid chain: uncharacterized protein (157 aa).

Residues 1–157 (MNRGPPLRSR…SFSFLVPSNS (157 aa)) form a disordered region. Over residues 8–31 (RSRPPSSPPPASAFPGPSPFPSPS) the composition is skewed to pro residues. Basic residues predominate over residues 62–71 (RTSHPPRCPH). A compositionally biased stretch (pro residues) spans 76 to 95 (PSAPSPPFTPPHPLPTPTPS). Low complexity-rich tracts occupy residues 96 to 117 (SSPR…SLAS) and 124 to 157 (SFSS…PSNS).

This is an uncharacterized protein from Vitis vinifera (Grape).